A 216-amino-acid polypeptide reads, in one-letter code: MAAGPRTSMLLAFALLCLPWTQEVGAFPAMPLSSLFANAVLRAQHLHQLAADTYKEFERAYIPEGQRYSIQNTQAAFCFSETIPAPTGKDEAQQRSDVELLRFSLLLIQSWLGPVQFLSRVFTNSLVFGTSDRVYEKLKDLEEGIQALMRELEDGSPRAGQILKQTYDKFDTNMRSDDALLKNYGLLSCFKKDLHKAETYLRVMKCRRFVESSCAF.

The N-terminal stretch at 1–26 (MAAGPRTSMLLAFALLCLPWTQEVGA) is a signal peptide. H45 serves as a coordination point for Zn(2+). A disulfide bridge connects residues C78 and C189. Phosphoserine is present on S131. E198 contacts Zn(2+). Cysteines 206 and 214 form a disulfide.

This sequence belongs to the somatotropin/prolactin family.

The protein localises to the secreted. Its function is as follows. Plays an important role in growth control. Its major role in stimulating body growth is to stimulate the liver and other tissues to secrete IGF1. It stimulates both the differentiation and proliferation of myoblasts. It also stimulates amino acid uptake and protein synthesis in muscle and other tissues. In Delphinus delphis (Short-beaked common dolphin), this protein is Somatotropin (GH1).